A 165-amino-acid chain; its full sequence is Transcription antitermination protein NusB (165 aa).

Positions 1–27 (MISDDTDQFNPRDAKSPEIAKGKSAKR) are disordered. A compositionally biased stretch (basic and acidic residues) spans 10–21 (NPRDAKSPEIAK).

It belongs to the NusB family.

Functionally, involved in transcription antitermination. Required for transcription of ribosomal RNA (rRNA) genes. Binds specifically to the boxA antiterminator sequence of the ribosomal RNA (rrn) operons. The chain is Transcription antitermination protein NusB from Pseudomonas syringae pv. tomato (strain ATCC BAA-871 / DC3000).